A 338-amino-acid polypeptide reads, in one-letter code: Phosphate acyltransferase (338 aa).

Belongs to the PlsX family. In terms of assembly, homodimer. Probably interacts with PlsY.

The protein resides in the cytoplasm. The catalysed reaction is a fatty acyl-[ACP] + phosphate = an acyl phosphate + holo-[ACP]. Its pathway is lipid metabolism; phospholipid metabolism. Functionally, catalyzes the reversible formation of acyl-phosphate (acyl-PO(4)) from acyl-[acyl-carrier-protein] (acyl-ACP). This enzyme utilizes acyl-ACP as fatty acyl donor, but not acyl-CoA. This is Phosphate acyltransferase from Mannheimia succiniciproducens (strain KCTC 0769BP / MBEL55E).